A 244-amino-acid polypeptide reads, in one-letter code: Putative esophageal gland cell secretory protein 6 (244 aa).

The N-terminal stretch at 1–22 is a signal peptide; it reads MDRRFTVFLVIALVTSIYEVLS. C88 and C91 are disulfide-bonded.

Belongs to the SelWTH family. SELT subfamily.

The chain is Putative esophageal gland cell secretory protein 6 (HSP6) from Heterodera glycines (Soybean cyst nematode worm).